The primary structure comprises 269 residues: 5'-nucleotidase SurE (269 aa).

Residues D11, D12, S43, and N101 each coordinate a divalent metal cation.

Belongs to the SurE nucleotidase family. A divalent metal cation serves as cofactor.

Its subcellular location is the cytoplasm. It carries out the reaction a ribonucleoside 5'-phosphate + H2O = a ribonucleoside + phosphate. Its function is as follows. Nucleotidase that shows phosphatase activity on nucleoside 5'-monophosphates. The polypeptide is 5'-nucleotidase SurE (Prochlorococcus marinus (strain MIT 9313)).